We begin with the raw amino-acid sequence, 1106 residues long: Carbamoyl phosphate synthase large chain (1106 aa).

Residues 1–402 are carboxyphosphate synthetic domain; it reads MPRREDIRSV…SFQKALRSLE (402 aa). Residues Arg129, Arg169, Gly175, Gly176, Glu208, Val210, Glu215, Gly241, Val242, His243, Gln285, and Glu299 each contribute to the ATP site. The ATP-grasp 1 domain maps to 133-328; the sequence is KKAMEKIGVR…IAKIAALLSI (196 aa). Positions 285, 299, and 301 each coordinate Mg(2+). Gln285, Glu299, and Asn301 together coordinate Mn(2+). The segment at 403–582 is oligomerization domain; it reads IDRYGFGSDG…YSSYDEEDES (180 aa). A carbamoyl phosphate synthetic domain region spans residues 583 to 964; sequence DVTNAKSVMI…AFLKSQYMAG (382 aa). In terms of domain architecture, ATP-grasp 2 spans 707 to 898; sequence VEVLEKLKLN…IVKYATRIMM (192 aa). The ATP site is built by Arg743, Ser782, Leu784, Glu789, Gly814, Ile815, His816, Ser817, Gln857, and Glu869. 3 residues coordinate Mg(2+): Gln857, Glu869, and Asn871. Mn(2+)-binding residues include Gln857, Glu869, and Asn871. In terms of domain architecture, MGS-like spans 965-1106; that stretch reads DELPSQGTVF…QEIHAMPKIL (142 aa). The tract at residues 965–1106 is allosteric domain; it reads DELPSQGTVF…QEIHAMPKIL (142 aa).

It belongs to the CarB family. As to quaternary structure, composed of two chains; the small (or glutamine) chain promotes the hydrolysis of glutamine to ammonia, which is used by the large (or ammonia) chain to synthesize carbamoyl phosphate. Tetramer of heterodimers (alpha,beta)4. Mg(2+) is required as a cofactor. Mn(2+) serves as cofactor.

It carries out the reaction hydrogencarbonate + L-glutamine + 2 ATP + H2O = carbamoyl phosphate + L-glutamate + 2 ADP + phosphate + 2 H(+). The enzyme catalyses hydrogencarbonate + NH4(+) + 2 ATP = carbamoyl phosphate + 2 ADP + phosphate + 2 H(+). It participates in amino-acid biosynthesis; L-arginine biosynthesis; carbamoyl phosphate from bicarbonate: step 1/1. Its pathway is pyrimidine metabolism; UMP biosynthesis via de novo pathway; (S)-dihydroorotate from bicarbonate: step 1/3. In terms of biological role, large subunit of the glutamine-dependent carbamoyl phosphate synthetase (CPSase). CPSase catalyzes the formation of carbamoyl phosphate from the ammonia moiety of glutamine, carbonate, and phosphate donated by ATP, constituting the first step of 2 biosynthetic pathways, one leading to arginine and/or urea and the other to pyrimidine nucleotides. The large subunit (synthetase) binds the substrates ammonia (free or transferred from glutamine from the small subunit), hydrogencarbonate and ATP and carries out an ATP-coupled ligase reaction, activating hydrogencarbonate by forming carboxy phosphate which reacts with ammonia to form carbamoyl phosphate. The polypeptide is Carbamoyl phosphate synthase large chain (Leptospira interrogans serogroup Icterohaemorrhagiae serovar copenhageni (strain Fiocruz L1-130)).